The chain runs to 383 residues: MGLSADLFVQKRSAASSLKQPKELGFYSKTQEGQFLVNDSSKLSYYYLPDTELERNLDLCSGIKKFKECFGNPDVDACTLSGLLKTIQAYEERKNKKVPADIITFRGIMRKLISAAFDSPKYNRVDLRVLSFNGQLFIREPNQAHPPPANTSSMEYRSYYSGYKFETLSTISKPLPQVTRNSLEKRHKRICCNGDQYITVVRSGVGHCKLVLGAEVDCVFDFTEDSSDNLKHYAELKCTKGVSTFAEARAFERKMFKTWLQCFLVGINRVIYGFRDENFILRSVEEYSTQEVPLLLKNNNPQLTNACMDAVRWYGALTEWLLSSIPREESAEHIRAYRLTFENNHLKLVEIEKSDTEYDQLVNGEGILTSEFREWRKSLNKSL.

Residue Glu166 coordinates a divalent metal cation. Substrate is bound at residue Glu215. Positions 217, 235, and 236 each coordinate a divalent metal cation. 2 residues coordinate substrate: Lys237 and Gln261.

The protein belongs to the DXO/Dom3Z family. In terms of assembly, interacts with RAT1; the interaction is direct, stabilizes RAT1 protein structure and stimulates its exoribonuclease activity. The interaction also stimulates RAI1 pyrophosphohydrolase activity, probably by recruiting it to mRNA substrates. The cofactor is a divalent metal cation.

The protein resides in the nucleus. The enzyme catalyses a 5'-end NAD(+)-phospho-ribonucleoside in mRNA + H2O = a 5'-end phospho-ribonucleoside in mRNA + NAD(+) + H(+). The catalysed reaction is a 5'-end (N(7)-methyl 5'-triphosphoguanosine)-ribonucleoside-ribonucleotide in mRNA + H2O = a (N(7)-methyl 5'-triphosphoguanosine)-nucleoside + a 5'-end phospho-ribonucleoside in mRNA + H(+). It catalyses the reaction a 5'-end triphospho-ribonucleoside in mRNA + H2O = a 5'-end phospho-ribonucleoside in mRNA + diphosphate + H(+). Its function is as follows. Decapping enzyme for NAD-capped RNAs: specifically hydrolyzes the nicotinamide adenine dinucleotide (NAD) cap from a subset of RNAs by removing the entire NAD moiety from the 5'-end of an NAD-capped RNA. The NAD-cap is present at the 5'-end of some RNAs and snoRNAs. In contrast to the canonical 5'-end N7 methylguanosine (m7G) cap, the NAD cap promotes mRNA decay. Also acts as a non-canonical decapping enzyme that removes the entire cap structure of m7G capped or incompletely capped RNAs. Has decapping activity toward incomplete 5'-end m7G cap mRNAs such as unmethylated 5'-end-capped RNA (cap0), while it has no activity toward 2'-O-ribose methylated m7G cap (cap1). Also possesses RNA 5'-pyrophosphohydrolase activity by hydrolyzing the 5'-end triphosphate to release pyrophosphates. Stimulates exoribonuclease activity of Rat1, allowing it to degrade RNAs with stable secondary structure more effectively. The sequence is that of Decapping nuclease RAI1 from Lachancea thermotolerans (strain ATCC 56472 / CBS 6340 / NRRL Y-8284) (Yeast).